The sequence spans 195 residues: Small ribosomal subunit protein uS5 (195 aa).

Residues 1–20 are disordered; that stretch reads MAREREGGGRGRREDREERD. An S5 DRBM domain is found at 23-86; sequence FVDKLVHINR…EAAKRGLIRV (64 aa). The segment at 161–195 is disordered; the sequence is DSPRSVAARRGIKVSTLQSRRRDADPADQSEAAVA.

It belongs to the universal ribosomal protein uS5 family. Part of the 30S ribosomal subunit. Contacts proteins S4 and S8.

In terms of biological role, with S4 and S12 plays an important role in translational accuracy. Its function is as follows. Located at the back of the 30S subunit body where it stabilizes the conformation of the head with respect to the body. This chain is Small ribosomal subunit protein uS5, found in Methylobacterium radiotolerans (strain ATCC 27329 / DSM 1819 / JCM 2831 / NBRC 15690 / NCIMB 10815 / 0-1).